The sequence spans 21 residues: MFFKIDLKNHPYLIRLKKQEE.

The protein to yeast fimbrin. The N-terminus is blocked.

Functionally, binds directly to F-actin and induces actin filament bundling. May function as a regulator of actin filament organization. The chain is 71 kDa F-actin-binding protein from Tetrahymena pyriformis.